Here is a 719-residue protein sequence, read N- to C-terminus: Plasmin and fibronectin-binding protein A (719 aa).

An N-terminal signal peptide occupies residues 1 to 45 (MLKIVKKLEVLMKYFVPNEVFSIRKLKVGTCSVLLAISILGSQGI). Disordered regions lie at residues 56 to 76 (PMAT…SPTV) and 109 to 128 (IRSN…TSTN). 5 PbH1 repeats span residues 287–310 (SNNV…QIAG), 362–384 (SENV…LVTA), 397–419 (PSNI…RFTG), 497–523 (VSDI…ELLR), and 525–546 (SDNL…VIED). The stretch at 601–658 (NNLSDKNEKEKNKEEKQSNSNNVIDSNQKNGEFNSSKDNRQMNDKIDNKQDNKTEEVN) forms a coiled coil. Residues 606 to 617 (KNEKEKNKEEKQ) show a composition bias toward basic and acidic residues. A disordered region spans residues 606–655 (KNEKEKNKEEKQSNSNNVIDSNQKNGEFNSSKDNRQMNDKIDNKQDNKTE). The span at 623-634 (VIDSNQKNGEFN) shows a compositional bias: polar residues. Positions 635-655 (SSKDNRQMNDKIDNKQDNKTE) are enriched in basic and acidic residues. An LPXTG sorting signal motif is present at residues 685–689 (LPKTG). Thr-688 is modified (pentaglycyl murein peptidoglycan amidated threonine). A propeptide spans 689–719 (GSNKIMELFLTVTGIGLLLTLKGLKYYGKDK) (removed by sortase).

The protein localises to the secreted. The protein resides in the cell wall. Functionally, acts as a fibronectin-dependent adhesin and invasin. Binds host (in this case human) fibronectin, plasmin, plasminogen, and human serum albumin. Where the bacteria adhere to human cells there is major recruitment of microvilli which seem to fuse to cover the streptococcal chains. Antibodies to this protein reduce bacterial growth in human blood. This Streptococcus pneumoniae (strain ATCC BAA-255 / R6) protein is Plasmin and fibronectin-binding protein A (pfbA).